A 276-amino-acid polypeptide reads, in one-letter code: Biotin synthase (276 aa).

Residues 1 to 226 (MKKIYLCAIS…EAIIMLAGGR (226 aa)) enclose the Radical SAM core domain. 3 residues coordinate [4Fe-4S] cluster: C17, C21, and C24. Residues C61, C95, and C153 each coordinate [2Fe-2S] cluster.

Belongs to the radical SAM superfamily. Biotin synthase family. As to quaternary structure, homodimer. [4Fe-4S] cluster serves as cofactor. [2Fe-2S] cluster is required as a cofactor.

The enzyme catalyses (4R,5S)-dethiobiotin + (sulfur carrier)-SH + 2 reduced [2Fe-2S]-[ferredoxin] + 2 S-adenosyl-L-methionine = (sulfur carrier)-H + biotin + 2 5'-deoxyadenosine + 2 L-methionine + 2 oxidized [2Fe-2S]-[ferredoxin]. It functions in the pathway cofactor biosynthesis; biotin biosynthesis; biotin from 7,8-diaminononanoate: step 2/2. Catalyzes the conversion of dethiobiotin (DTB) to biotin by the insertion of a sulfur atom into dethiobiotin via a radical-based mechanism. This is Biotin synthase from Nautilia profundicola (strain ATCC BAA-1463 / DSM 18972 / AmH).